A 118-amino-acid polypeptide reads, in one-letter code: Ribosomal silencing factor RsfS (118 aa).

The protein belongs to the Iojap/RsfS family. Interacts with ribosomal protein uL14 (rplN).

Its subcellular location is the cytoplasm. Functions as a ribosomal silencing factor. Interacts with ribosomal protein uL14 (rplN), blocking formation of intersubunit bridge B8. Prevents association of the 30S and 50S ribosomal subunits and the formation of functional ribosomes, thus repressing translation. This is Ribosomal silencing factor RsfS from Bacillus subtilis (strain 168).